Here is a 307-residue protein sequence, read N- to C-terminus: Methionyl-tRNA formyltransferase (307 aa).

108 to 111 (SLLP) provides a ligand contact to (6S)-5,6,7,8-tetrahydrofolate.

It belongs to the Fmt family.

The catalysed reaction is L-methionyl-tRNA(fMet) + (6R)-10-formyltetrahydrofolate = N-formyl-L-methionyl-tRNA(fMet) + (6S)-5,6,7,8-tetrahydrofolate + H(+). Attaches a formyl group to the free amino group of methionyl-tRNA(fMet). The formyl group appears to play a dual role in the initiator identity of N-formylmethionyl-tRNA by promoting its recognition by IF2 and preventing the misappropriation of this tRNA by the elongation apparatus. The chain is Methionyl-tRNA formyltransferase from Xanthomonas axonopodis pv. citri (strain 306).